We begin with the raw amino-acid sequence, 464 residues long: Sushi repeat-containing protein SRPX (464 aa).

Residues 1-30 form the signal peptide; sequence MGSPAHRPALLLLLPPLLLLLLLRVPPSRS. Ser-34 is a glycosylation site (O-linked (Xyl...) (chondroitin sulfate) serine). Disulfide bonds link Cys-57-Cys-85, Cys-69-Cys-103, Cys-89-Cys-115, Cys-120-Cys-161, and Cys-147-Cys-174. 2 Sushi domains span residues 57–117 and 118–176; these read CSPI…ICKQ and KRCP…SCVD. The 83-residue stretch at 177 to 259 folds into the HYR domain; the sequence is MEPPRIKCPS…TCKFRVKVRV (83 aa). Positions 260-319 constitute a Sushi 3 domain; that stretch reads KRCGKLNAPENGYMKCSSDGDNYGATCEFSCIGGYELQGSPARVCQSNLAWSGTEPTCAA. Intrachain disulfides connect Cys-262–Cys-304 and Cys-290–Cys-317.

In terms of tissue distribution, detected in fibroblasts (at protein level). Retina and heart; less in placenta, pancreas, lung, liver, skeletal muscle, kidney and brain.

Its subcellular location is the cell surface. May be involved in phagocytosis during disk shedding, cell adhesion to cells other than the pigment epithelium or signal transduction. This Homo sapiens (Human) protein is Sushi repeat-containing protein SRPX (SRPX).